The following is a 391-amino-acid chain: Phosphoglycerate kinase (391 aa).

Substrate-binding positions include 21 to 23 (DLN), Arg36, 59 to 62 (HLGR), Arg113, and Arg146. Residues Lys197, Glu319, and 345 to 348 (GGDT) each bind ATP.

The protein belongs to the phosphoglycerate kinase family. In terms of assembly, monomer.

The protein resides in the cytoplasm. The enzyme catalyses (2R)-3-phosphoglycerate + ATP = (2R)-3-phospho-glyceroyl phosphate + ADP. Its pathway is carbohydrate degradation; glycolysis; pyruvate from D-glyceraldehyde 3-phosphate: step 2/5. This Colwellia psychrerythraea (strain 34H / ATCC BAA-681) (Vibrio psychroerythus) protein is Phosphoglycerate kinase.